A 420-amino-acid polypeptide reads, in one-letter code: Acetyl-CoA acetyltransferase, mitochondrial (420 aa).

Residues Met-1 to Asn-33 constitute a mitochondrion transit peptide. Cys-119 acts as the Acyl-thioester intermediate in catalysis. Residues Tyr-212, Arg-251–Asp-253, and Lys-256 contribute to the CoA site. Position 212 (Tyr-212) interacts with K(+). Positions 273, 274, and 276 each coordinate K(+). Ser-277 is a CoA binding site. Val-374 contributes to the K(+) binding site. Residue Cys-406 is the Proton donor/acceptor of the active site.

The protein belongs to the thiolase-like superfamily. Thiolase family. Homotetramer.

It is found in the mitochondrion. It catalyses the reaction 2 acetyl-CoA = acetoacetyl-CoA + CoA. The catalysed reaction is propanoyl-CoA + acetyl-CoA = 2-methyl-3-oxobutanoyl-CoA + CoA. It participates in lipid metabolism; fatty acid beta-oxidation. Functionally, this is one of the enzymes that catalyzes the last step of the mitochondrial beta-oxidation pathway, an aerobic process breaking down fatty acids into acetyl-CoA. Using free coenzyme A/CoA, catalyzes the thiolytic cleavage of medium- to long-chain 3-oxoacyl-CoAs into acetyl-CoA and a fatty acyl-CoA shortened by two carbon atoms. The activity of the enzyme is reversible and it can also catalyze the condensation of two acetyl-CoA molecules into acetoacetyl-CoA. Thereby, it plays a major role in ketone body metabolism. This is Acetyl-CoA acetyltransferase, mitochondrial (acat1) from Xenopus tropicalis (Western clawed frog).